We begin with the raw amino-acid sequence, 197 residues long: Protein-methionine-sulfoxide reductase heme-binding subunit MsrQ (197 aa).

Transmembrane regions (helical) follow at residues 10–30, 42–62, 75–95, 110–130, 147–167, and 169–189; these read IFIV…MNLL, LGLG…LQKL, LGLW…FFIL, PYII…VTSN, LVYA…RSDL, and EWAI…PAVA.

This sequence belongs to the MsrQ family. As to quaternary structure, heterodimer of a catalytic subunit (MsrP) and a heme-binding subunit (MsrQ). Requires FMN as cofactor. The cofactor is heme b.

It localises to the cell inner membrane. Part of the MsrPQ system that repairs oxidized periplasmic proteins containing methionine sulfoxide residues (Met-O), using respiratory chain electrons. Thus protects these proteins from oxidative-stress damage caused by reactive species of oxygen and chlorine generated by the host defense mechanisms. MsrPQ is essential for the maintenance of envelope integrity under bleach stress, rescuing a wide series of structurally unrelated periplasmic proteins from methionine oxidation. MsrQ provides electrons for reduction to the reductase catalytic subunit MsrP, using the quinone pool of the respiratory chain. The protein is Protein-methionine-sulfoxide reductase heme-binding subunit MsrQ of Pseudomonas putida (strain ATCC 47054 / DSM 6125 / CFBP 8728 / NCIMB 11950 / KT2440).